The chain runs to 535 residues: CTP synthase (535 aa).

An amidoligase domain region spans residues Met-1–Leu-267. A CTP-binding site is contributed by Ser-13. Position 13 (Ser-13) interacts with UTP. Position 14 to 19 (Ser-14 to Ile-19) interacts with ATP. Residue Tyr-54 participates in L-glutamine binding. ATP is bound at residue Asp-71. Positions 71 and 141 each coordinate Mg(2+). CTP-binding positions include Asp-148 to Glu-150, Lys-188 to Gln-193, and Lys-224. UTP is bound by residues Lys-188–Gln-193 and Lys-224. Residues Thr-292–Ser-534 form the Glutamine amidotransferase type-1 domain. Position 354 (Gly-354) interacts with L-glutamine. Cys-381 functions as the Nucleophile; for glutamine hydrolysis in the catalytic mechanism. Residues Leu-382–Gln-385, Glu-405, and Arg-462 contribute to the L-glutamine site. Catalysis depends on residues His-507 and Glu-509.

The protein belongs to the CTP synthase family. As to quaternary structure, homotetramer.

The catalysed reaction is UTP + L-glutamine + ATP + H2O = CTP + L-glutamate + ADP + phosphate + 2 H(+). It carries out the reaction L-glutamine + H2O = L-glutamate + NH4(+). The enzyme catalyses UTP + NH4(+) + ATP = CTP + ADP + phosphate + 2 H(+). It participates in pyrimidine metabolism; CTP biosynthesis via de novo pathway; CTP from UDP: step 2/2. Allosterically activated by GTP, when glutamine is the substrate; GTP has no effect on the reaction when ammonia is the substrate. The allosteric effector GTP functions by stabilizing the protein conformation that binds the tetrahedral intermediate(s) formed during glutamine hydrolysis. Inhibited by the product CTP, via allosteric rather than competitive inhibition. Catalyzes the ATP-dependent amination of UTP to CTP with either L-glutamine or ammonia as the source of nitrogen. Regulates intracellular CTP levels through interactions with the four ribonucleotide triphosphates. In Bacillus pumilus (strain SAFR-032), this protein is CTP synthase.